The chain runs to 325 residues: Bifunctional nuclease 2 (325 aa).

The 136-residue stretch at 119 to 254 (CVHNNSQGRN…SLAYSDGIRS (136 aa)) folds into the BFN domain. A UVR domain is found at 285 to 320 (EAQEFGLIRNMLIAAVEERYKDAATWRDKLMLLRSK).

This sequence belongs to the bifunctional nuclease family.

The protein localises to the nucleus. Functionally, bifunctional nuclease with both RNase and DNase activities. Involved in basal defense response. Participates in abscisic acid-derived callose deposition following infection by a necrotrophic pathogen. The chain is Bifunctional nuclease 2 (BBD2) from Oryza sativa subsp. japonica (Rice).